The chain runs to 308 residues: Cytochrome b (308 aa).

4 helical membrane-spanning segments follow: residues 1–21 (SGSL…FLAA), 45–66 (WLIR…YLHI), 81–101 (WNIG…GYVL), and 146–166 (FFAL…VHLT). Heme b is bound by residues His-51 and His-65. Residues His-150 and His-164 each coordinate heme b. His-169 is an a ubiquinone binding site. A run of 3 helical transmembrane segments spans residues 194–214 (TKDV…ALFS), 256–276 (LGGV…PLLH), and 288–308 (LSQI…WVGS).

Belongs to the cytochrome b family. In terms of assembly, the cytochrome bc1 complex contains 11 subunits: 3 respiratory subunits (MT-CYB, CYC1 and UQCRFS1), 2 core proteins (UQCRC1 and UQCRC2) and 6 low-molecular weight proteins (UQCRH/QCR6, UQCRB/QCR7, UQCRQ/QCR8, UQCR10/QCR9, UQCR11/QCR10 and a cleavage product of UQCRFS1). This cytochrome bc1 complex then forms a dimer. Requires heme b as cofactor.

It localises to the mitochondrion inner membrane. Its function is as follows. Component of the ubiquinol-cytochrome c reductase complex (complex III or cytochrome b-c1 complex) that is part of the mitochondrial respiratory chain. The b-c1 complex mediates electron transfer from ubiquinol to cytochrome c. Contributes to the generation of a proton gradient across the mitochondrial membrane that is then used for ATP synthesis. The polypeptide is Cytochrome b (MT-CYB) (Garritornis isidorei (Papuan babbler)).